Consider the following 1047-residue polypeptide: FACT complex subunit SPT16 (1047 aa).

Ala-2 bears the N-acetylalanine mark. N6-acetyllysine is present on Lys-139. A Phosphoserine modification is found at Ser-188. An N6-acetyllysine mark is found at Lys-196 and Lys-223. A coiled-coil region spans residues 432 to 507 (LKNEDEEEEE…GEQQIQKARK (76 aa)). Ser-455 bears the Phosphoserine mark. The disordered stretch occupies residues 492–518 (RLTEQKGEQQIQKARKSNVSYKNPSLM). Residue Lys-497 forms a Glycyl lysine isopeptide (Lys-Gly) (interchain with G-Cter in SUMO2) linkage. Positions 499–514 (EQQIQKARKSNVSYKN) are enriched in polar residues. Ser-508 carries the phosphoserine modification. Position 513 is an N6-acetyllysine; alternate (Lys-513). Lys-513 is covalently cross-linked (Glycyl lysine isopeptide (Lys-Gly) (interchain with G-Cter in SUMO2); alternate). Lys-647 participates in a covalent cross-link: Glycyl lysine isopeptide (Lys-Gly) (interchain with G-Cter in SUMO2). Phosphoserine is present on residues Ser-650 and Ser-658. Lys-732 and Lys-786 each carry N6-acetyllysine. Thr-903 is subject to Phosphothreonine. N6-acetyllysine is present on Lys-904. Positions 918–1047 (EQGGWSFLEP…SSAPPKKKRK (130 aa)) are disordered. The segment covering 927-973 (PEGEGSDAEEGDSESEIEDETFNPSEDDYEEEEEDSDEDYSSEAEES) has biased composition (acidic residues). Phosphoserine occurs at positions 979, 982, 986, and 1015. The span at 985–1005 (ESGKDWDELEEEARKADRESR) shows a compositional bias: basic and acidic residues. Residues 1024-1039 (VHSSGRGSNRGSRHSS) are compositionally biased toward low complexity.

It belongs to the peptidase M24 family. SPT16 subfamily. Interacts with MYOG (via C-terminal region). Component of the FACT complex, a stable heterodimer of SSRP1 and SUPT16H. Also a component of a CK2-SPT16-SSRP1 complex which forms following UV irradiation, composed of SSRP1, SUPT16H, CSNK2A1, CSNK2A2 and CSNK2B. Interacts with NEK9. Binds to histone H2A-H2B. Identified in a centromere complex containing histones H2A, H2B and H4, and at least CENPA, CENPB, CENPC, CENPT, CENPN, HJURP, SUPT16H, SSRP1 and RSF1. Interacts with GTF2E2. In terms of assembly, (Microbial infection) Interacts with Herpes simplex virus 1 (HHV-1) protein ICP22; this interaction relocalizes the FACT complex to viral genomes in infected cells. In terms of processing, ADP-ribosylated. ADP-ribosylation by PARP1 is induced by genotoxic stress and correlates with dissociation of FACT from chromatin. In terms of tissue distribution, ubiquitous.

It localises to the nucleus. The protein localises to the chromosome. In terms of biological role, component of the FACT complex, a general chromatin factor that acts to reorganize nucleosomes. The FACT complex is involved in multiple processes that require DNA as a template such as mRNA elongation, DNA replication and DNA repair. During transcription elongation the FACT complex acts as a histone chaperone that both destabilizes and restores nucleosomal structure. It facilitates the passage of RNA polymerase II and transcription by promoting the dissociation of one histone H2A-H2B dimer from the nucleosome, then subsequently promotes the reestablishment of the nucleosome following the passage of RNA polymerase II. The FACT complex is probably also involved in phosphorylation of 'Ser-392' of p53/TP53 via its association with CK2 (casein kinase II). The polypeptide is FACT complex subunit SPT16 (SUPT16H) (Homo sapiens (Human)).